The primary structure comprises 140 residues: UPF0102 protein ACIAD1132 (140 aa).

It belongs to the UPF0102 family.

This chain is UPF0102 protein ACIAD1132, found in Acinetobacter baylyi (strain ATCC 33305 / BD413 / ADP1).